Here is a 190-residue protein sequence, read N- to C-terminus: High affinity copper uptake protein 1 (190 aa).

The segment at M1 to G35 is disordered. Topologically, residues M1–L61 are extracellular. The Bis-His motif signature appears at H5–H6. Positions M7–M12 match the Methionine segments (Mets) motif motif. N15 carries N-linked (GlcNAc...) asparagine glycosylation. Residues T26 to G35 show a composition bias toward low complexity. O-linked (GalNAc...) threonine glycosylation occurs at T27. The helical transmembrane segment at V62–F82 threads the bilayer. Residues Y83–H132 are Cytoplasmic-facing. A Phosphothreonine modification is found at T114. Residues L133–F153 traverse the membrane as a helical segment. The Extracellular portion of the chain corresponds to M154–Y156. The helical transmembrane segment at N157–W177 threads the bilayer. Over K178–H190 the chain is Cytoplasmic. At C189 the chain carries Cysteine sulfenic acid (-SOH).

It belongs to the copper transporter (Ctr) (TC 1.A.56) family. SLC31A subfamily. As to quaternary structure, homotrimer; is stabilized by cisplatin via interactions between cisplatin and the methionine-rich clusters, and could be crucial for the copper(2+) reduction process and copper(1+) stabilization. Heterotrimer between SLC31A1, CCS and SOD1; this heterotrimer is copper(1+)-mediated and its maintenance is regulated through SOD1 activation. Interacts with KDR; this interaction is induced upon VEGFA stimulation leading to SLC31A1 and KDR subsequent co-internalization to early endosomes, thereby activating KDR downstream signaling in endothelial cells. Interacts (via C-terminal domain) with ATOX1 (via dimer form); this interaction improves ATOX1 stability and controls intracellular copper(1+) levels. Interacts with SLC31A2; this interaction stabilizes SLC31A2 and protects its from ubiquitination and degradation. Interacts (via C-terminal domain) with CCS; this interaction is copper(1+)-mediated. O-Glycosylation at Thr-27 protects from proteolytic cleavage in the N-terminal extracellular domain. In terms of processing, proteolytic cleavage, leading to a truncated form, is facilitated by SLC31A2 and initiated preferentially by CTSL and to a minor extend by CTSB in endolysosomal compartments. In vitro, is cleaved by CTSL/cathepsin L between residues 8 and 9 from the amino terminus. A post-CTSL/cathepsin L processing occurs to yield to the fully truncated form. Post-translationally, sulfenylated at Cys-189 after stimulation with VEGFA, which induces SLC31A1-KDR disulfide bond formation and their co-internalization to early endosomes, driving to a sustained VEGFR2 signaling.

The protein localises to the cell membrane. Its subcellular location is the early endosome membrane. It localises to the recycling endosome membrane. The protein resides in the apical cell membrane. It is found in the late endosome membrane. The protein localises to the basolateral cell membrane. The enzyme catalyses Ag(+)(out) = Ag(+)(in). The catalysed reaction is Cu(+)(out) = Cu(+)(in). Copper(1+) transport is stimulated by extracellular acidic pH and high potassium ions concentrations. Copper(1+) import is regulated by a copper(1+)-dependent recycling of SLC31A1. Uniporter that mediates the transport of copper(1+) from the extracellular space to the cytoplasm, across the plasma membrane and delivers directly copper(1+) to specific chaperone such as ATOX1, via a copper(1+)- mediated transient interaction between the C-terminal domain and a copper(1+) chaperone, thus controlling intracellular copper(1+) levels. May function in copper(1+) import from the apical membrane thus may drive intestinal copper absorption. The copper(1+) transport mechanism is sodium-independent, saturable and of high-affinity. Also mediates the uptake of silver(1+). May function in the influx of the platinum-containing chemotherapeutic agents. The platinum-containing chemotherapeutic agents uptake is saturable. In vitro, mediates the transport of cadmium(2+) into cells. Also participates in the first step of copper(2+) acquisition by cells through a direct transfer of copper(2+) from copper(2+) carriers in blood, such as ALB to the N-terminal domain of SLC31A1, leading to copper(2+) reduction and probably followed by copper(1+) stabilization. In addition, functions as a redox sensor to promote angiogenesis in endothelial cells, in a copper(1+) transport independent manner, by transmitting the VEGF-induced ROS signal through a sulfenylation at Cys-189 leadin g to a subsequent disulfide bond formation between SLC31A1 and KDR. The SLC31A1-KDR complex is then co-internalized to early endosomes, driving a sustained VEGFR2 signaling. Its function is as follows. Mobilizes copper(1+) out of the endosomal compartment, making copper(1+) available for export out of the cells. This is High affinity copper uptake protein 1 from Homo sapiens (Human).